Here is a 419-residue protein sequence, read N- to C-terminus: LanC-like protein 3 homolog (419 aa).

It belongs to the LanC-like protein family.

The chain is LanC-like protein 3 homolog from Drosophila melanogaster (Fruit fly).